A 503-amino-acid polypeptide reads, in one-letter code: Interferon regulatory factor 7 (503 aa).

Positions 11–126 (RVLFGEWLLG…DPHKVYALSR (116 aa)) form a DNA-binding region, IRF tryptophan pentad repeat. Residues 69–88 (RWPPSSRGGGPPPEAETAER) form a disordered region. Position 92 is an N6-acetyllysine; by KAT2A and KAT2B (Lys-92). 2 disordered regions span residues 133–156 (GPGTDQTEAEAPAAVPPPQGGPPG) and 242–277 (TTPSPGPQPAALTTGEAAAPESPHQAEPYLSPSPSA). Pro residues predominate over residues 146-156 (AVPPPQGGPPG). The interval 284 to 456 (PSPGALDVTI…SLVLVKLEPW (173 aa)) is necessary for the interaction with NMI. Lys-375 is covalently cross-linked (Glycyl lysine isopeptide (Lys-Gly) (interchain with G-Cter in ubiquitin)). Residues Lys-444 and Lys-446 each participate in a glycyl lysine isopeptide (Lys-Gly) (interchain with G-Cter in SUMO) cross-link. 3 positions are modified to phosphoserine: Ser-471, Ser-472, and Ser-475. Ser-477 and Ser-479 each carry phosphoserine; by TBK1 and IKKE. Phosphoserine is present on residues Ser-483, Ser-484, and Ser-487.

Belongs to the IRF family. As to quaternary structure, monomer. Homodimer; phosphorylation-induced. Heterodimer with IRF3. Interacts with TICAM1 and TICAM2. Interacts with MYD88 and TRAF6. Interacts with TRIM35. Interacts with NMI; the interaction is direct and leads to the inhibition of IRF7-mediated type I IFN production. Interacts with GBP4; preventing interaction between TRAF6 and IRF7, resulting in impaired TRAF6-mediated IRF7 ubiquitination. (Microbial infection) Interacts with Epstein-Barr virus LF2 and LMP1. In terms of assembly, (Microbial infection) Interacts with rotavirus A NSP1; this interaction leads to the proteasome-dependent degradation of IRF7. As to quaternary structure, (Microbial infection) Interacts with human herpes virus 8/HHV-8 proteins ORF45 and vIRF-1. (Microbial infection) Interacts with human T-cell leukemia virus 1/HTLV-1 protein HBZ. In terms of assembly, (Microbial infection) Interacts with Seneca Valley virus protease 3C; this interaction is involved in the suppression of IRF7 expression and phosphorylation by the virus. As to quaternary structure, (Microbial infection) Interacts with ebolavirus VP35; this interaction mediates the sumoylation of IRF7 and contributes to the viral inhibition of IFN-type I production. (Microbial infection) Interacts with severe fever with thrombocytopenia syndrome virus (SFTSV) NSs; this interaction sequesters IRF7 in NSs-induced cytoplasmic inclusion bodies. In terms of assembly, (Microbial infection) Interacts with herpes virus 8/HHV-8 protein vIRF-4; this interaction prevents IRF7 dimerization and subsequent activation. As to quaternary structure, (Microbial infection) Interacts with human metapneumovirus protein M2-2; this interaction prevents IRF7 phosphorlyation and subsequent TLR7/9-dependent IFN-alpha induction. Post-translationally, acetylation inhibits its DNA-binding ability and activity. In response to a viral infection, phosphorylated on Ser-477 and Ser-479 by TBK1 and IKBKE1. Phosphorylation, and subsequent activation is inhibited by vaccinia virus protein E3. In TLR7- and TLR9-mediated signaling pathway, phosphorylated by IRAK1. In terms of processing, TRAF6-mediated ubiquitination is required for IRF7 activation. TRIM35 mediates IRF7 'Lys-48'-linked polyubiquitination and subsequent proteasomal degradation. Ubiquitinated by UBE3C, leading to its degradation. Post-translationally, sumoylated by TRIM28, which inhibits its transactivation activity. (Microbial infection) Cleaved and inactivated by the protease 3C of enterovirus 71 allowing the virus to disrupt the host type I interferon production. In terms of processing, (Microbial infection) Cleaved and inactivated by the protease 3C of human enterovirus 68D (EV68) allowing the virus to disrupt the host type I interferon production. Post-translationally, 'Lys-48'-linked polyubiquitination and subsequent proteasomal degradation is NMI-dependent in response to Sendai virus infection. 'Lys-63'-linked ubiquitination by NEURL3 promotes IRF7 activation. As to expression, expressed predominantly in spleen, thymus and peripheral blood leukocytes.

It localises to the nucleus. The protein resides in the cytoplasm. Its activity is regulated as follows. In the absence of viral infection, maintained as a monomer in an autoinhibited state and phosphorylation disrupts this autoinhibition leading to the liberation of the DNA-binding and dimerization activities and its nuclear localization where it can activate type I IFN and ISG genes. Key transcriptional regulator of type I interferon (IFN)-dependent immune responses and plays a critical role in the innate immune response against DNA and RNA viruses. Regulates the transcription of type I IFN genes (IFN-alpha and IFN-beta) and IFN-stimulated genes (ISG) by binding to an interferon-stimulated response element (ISRE) in their promoters. Can efficiently activate both the IFN-beta (IFNB) and the IFN-alpha (IFNA) genes and mediate their induction via both the virus-activated, MyD88-independent pathway and the TLR-activated, MyD88-dependent pathway. Induces transcription of ubiquitin hydrolase USP25 mRNA in response to lipopolysaccharide (LPS) or viral infection in a type I IFN-dependent manner. Required during both the early and late phases of the IFN gene induction but is more critical for the late than for the early phase. Exists in an inactive form in the cytoplasm of uninfected cells and following viral infection, double-stranded RNA (dsRNA), or toll-like receptor (TLR) signaling, becomes phosphorylated by IKBKE and TBK1 kinases. This induces a conformational change, leading to its dimerization and nuclear localization where along with other coactivators it can activate transcription of the type I IFN and ISG genes. Can also play a role in regulating adaptive immune responses by inducing PSMB9/LMP2 expression, either directly or through induction of IRF1. Binds to the Q promoter (Qp) of EBV nuclear antigen 1 a (EBNA1) and may play a role in the regulation of EBV latency. Can activate distinct gene expression programs in macrophages and regulate the anti-tumor properties of primary macrophages. The polypeptide is Interferon regulatory factor 7 (IRF7) (Homo sapiens (Human)).